The primary structure comprises 446 residues: GRAM domain-containing protein 2B (446 aa).

Residue methionine 1 is modified to N-acetylmethionine. Residues 1–120 (MVKKRLPSND…RKKSSSSSQY (120 aa)) are disordered. Low complexity predominate over residues 29–43 (SRSSTDSPSSVFFSS). Basic and acidic residues predominate over residues 95–113 (DKNDCKTESKNDPKTERKK). The GRAM domain maps to 124-191 (MHFHKLFLSV…FSVTLIKKTK (68 aa)). Residues 234–247 (TSVGNSPNPSSAEN) show a composition bias toward polar residues. The disordered stretch occupies residues 234–253 (TSVGNSPNPSSAENSFRADR). Phosphoserine is present on residues serine 239, serine 256, and serine 266. The tract at residues 276-298 (RQDMEGYSSSGSQTPESENSRDF) is disordered. A compositionally biased stretch (polar residues) spans 282–292 (YSSSGSQTPES).

This Pongo abelii (Sumatran orangutan) protein is GRAM domain-containing protein 2B (GRAMD2B).